A 1200-amino-acid chain; its full sequence is Nuclear envelope pore membrane protein POM 121 (1200 aa).

The interval Met-1–Gly-29 is disordered. A cisternal side region spans residues Met-1–Ala-56. Basic and acidic residues predominate over residues Gly-10–Ser-25. The chain crosses the membrane as a helical span at residues Leu-57–Gly-77. A pore side region spans residues Arg-76 to Lys-1200. The residue at position 83 (Ser-83) is a Phosphoserine. Disordered regions lie at residues His-91 to Gln-167 and Pro-177 to Ser-196. Residues Leu-143–Gly-152 show a composition bias toward basic and acidic residues. Ser-244 is subject to Phosphoserine. Disordered regions lie at residues Lys-294 to Glu-328, Ser-345 to Glu-509, Pro-530 to Lys-627, Ser-640 to Pro-692, Pro-706 to Lys-744, Thr-1075 to Ser-1151, and Pro-1173 to Lys-1200. The span at Thr-298 to Asn-312 shows a compositional bias: basic and acidic residues. A phosphoserine mark is found at Ser-319, Ser-322, Ser-325, Ser-345, Ser-355, Ser-367, and Ser-370. Residues Thr-365 to Ala-374 are compositionally biased toward low complexity. A compositionally biased stretch (polar residues) spans Ile-379–Ile-397. Residues Ser-404 to Ser-419 are compositionally biased toward low complexity. Residues Ser-408, Ser-409, Ser-412, Ser-413, Ser-416, and Ser-417 each carry the phosphoserine modification. Composition is skewed to basic and acidic residues over residues Arg-424–Glu-433 and Thr-446–Thr-456. Composition is skewed to low complexity over residues Gln-463–Gly-477, Pro-546–Glu-574, Glu-581–Ala-598, and Pro-605–Ser-621. Residues Ser-640–Gln-657 are compositionally biased toward polar residues. Composition is skewed to low complexity over residues Ser-658–Pro-669, Ser-681–Pro-692, Ser-715–Thr-742, and Thr-1075–Ser-1099. Positions Gln-1100 to Glu-1121 are enriched in polar residues. Residues Leu-1190 to Lys-1200 are compositionally biased toward basic residues.

The protein belongs to the POM121 family. In terms of processing, proteolytically cleaved by caspase-3 during apoptosis.

It localises to the nucleus. The protein localises to the nuclear pore complex. It is found in the nucleus membrane. Its subcellular location is the endoplasmic reticulum membrane. Functionally, essential component of the nuclear pore complex (NPC). The repeat-containing domain may be involved in anchoring components of the pore complex to the pore membrane. When overexpressed in cells induces the formation of cytoplasmic annulate lamellae (AL). This is Nuclear envelope pore membrane protein POM 121 (Pom121) from Mus musculus (Mouse).